The primary structure comprises 339 residues: N-acetyl-gamma-glutamyl-phosphate reductase (339 aa).

The active site involves Cys144.

This sequence belongs to the NAGSA dehydrogenase family. Type 1 subfamily.

It localises to the cytoplasm. It carries out the reaction N-acetyl-L-glutamate 5-semialdehyde + phosphate + NADP(+) = N-acetyl-L-glutamyl 5-phosphate + NADPH + H(+). It participates in amino-acid biosynthesis; L-arginine biosynthesis; N(2)-acetyl-L-ornithine from L-glutamate: step 3/4. Catalyzes the NADPH-dependent reduction of N-acetyl-5-glutamyl phosphate to yield N-acetyl-L-glutamate 5-semialdehyde. The sequence is that of N-acetyl-gamma-glutamyl-phosphate reductase from Methanobrevibacter smithii (strain ATCC 35061 / DSM 861 / OCM 144 / PS).